The sequence spans 82 residues: Small ribosomal subunit protein bS18 (82 aa).

Belongs to the bacterial ribosomal protein bS18 family. Part of the 30S ribosomal subunit. Forms a tight heterodimer with protein bS6.

In terms of biological role, binds as a heterodimer with protein bS6 to the central domain of the 16S rRNA, where it helps stabilize the platform of the 30S subunit. This is Small ribosomal subunit protein bS18 from Bifidobacterium adolescentis (strain ATCC 15703 / DSM 20083 / NCTC 11814 / E194a).